The chain runs to 181 residues: Probable pyruvoyl-dependent arginine decarboxylase (181 aa).

Position 43 is a pyruvic acid (Ser) (S43).

This sequence belongs to the PdaD family. Pyruvate is required as a cofactor.

It catalyses the reaction L-arginine + H(+) = agmatine + CO2. The sequence is that of Probable pyruvoyl-dependent arginine decarboxylase from Prosthecochloris aestuarii (strain DSM 271 / SK 413).